A 343-amino-acid chain; its full sequence is Histone H1.8 (343 aa).

The segment covering 1–32 has biased composition (low complexity); sequence MAPGSIASSDTSSSTSSSSTSSASSASAEGSS. Disordered stretches follow at residues 1–50 and 122–343; these read MAPG…VRAP and ATGS…EAEG. Residues 52–130 enclose the H15 domain; that stretch reads RHPPVLRMVL…GATGSFKLVP (79 aa). The span at 132-142 shows a compositional bias: basic residues; it reads DKRKIPPRKTA. Basic and acidic residues-rich tracts occupy residues 150–183, 199–219, and 235–247; these read EGKD…ERAA, QTKD…RPDK, and KVKE…ADTK. The Nuclear localization signal signature appears at 161 to 176; it reads KKDPANTVEVKKGSRK. The span at 253–265 shows a compositional bias: polar residues; that stretch reads QPGSQSSKSTVTK.

The protein belongs to the histone H1/H5 family. As to expression, oocyte (at protein level).

It localises to the cytoplasm. The protein resides in the nucleus. It is found in the chromosome. Functionally, may play a key role in the control of gene expression during oogenesis and early embryogenesis, presumably through the perturbation of chromatin structure. Essential for meiotic maturation of germinal vesicle-stage oocytes. The somatic type linker histone H1c is rapidly replaced by H1oo in a donor nucleus transplanted into an oocyte. The greater mobility of H1oo as compared to H1c may contribute to this rapid replacement and increased instability of the embryonic chromatin structure. The rapid replacement of H1c with H1oo may play an important role in nuclear remodeling. The chain is Histone H1.8 from Bos taurus (Bovine).